Reading from the N-terminus, the 98-residue chain is Co-chaperonin GroES (98 aa).

The protein belongs to the GroES chaperonin family. As to quaternary structure, heptamer of 7 subunits arranged in a ring. Interacts with the chaperonin GroEL.

It localises to the cytoplasm. Functionally, together with the chaperonin GroEL, plays an essential role in assisting protein folding. The GroEL-GroES system forms a nano-cage that allows encapsulation of the non-native substrate proteins and provides a physical environment optimized to promote and accelerate protein folding. GroES binds to the apical surface of the GroEL ring, thereby capping the opening of the GroEL channel. This is Co-chaperonin GroES from Coprothermobacter proteolyticus (strain ATCC 35245 / DSM 5265 / OCM 4 / BT).